The chain runs to 386 residues: Delta(7)-sterol 5(6)-desaturase ERG3 (386 aa).

3 consecutive transmembrane segments (helical) span residues 120 to 140, 172 to 192, and 206 to 226; these read LSLF…VAYL, IPVM…GYSF, and AILW…YFLH. The region spanning 214–337 is the Fatty acid hydroxylase domain; the sequence is FILFTDCGIY…FTTLWDRLGN (124 aa). Positions 226-230 match the Histidine box-1 motif; the sequence is HRWLH. A Histidine box-2 motif is present at residues 239-243; it reads HKPHH. The chain crosses the membrane as a helical span at residues 272-292; the sequence is PLLFPLHKVLYLFLFTFVNFW. Residues 314–318 carry the Histidine box-3 motif; the sequence is HTVHH.

This sequence belongs to the sterol desaturase family. Fe cation serves as cofactor.

The protein localises to the endoplasmic reticulum membrane. It carries out the reaction a Delta(7)-sterol + 2 Fe(II)-[cytochrome b5] + O2 + 2 H(+) = a Delta(5),Delta(7)-sterol + 2 Fe(III)-[cytochrome b5] + 2 H2O. It participates in steroid metabolism; ergosterol biosynthesis; ergosterol from zymosterol: step 3/5. Functionally, C-5 sterol desaturase; part of the third module of ergosterol biosynthesis pathway that includes the late steps of the pathwa. ERG3 catalyzes the introduction of a C-5 double bond in the B ring to produce 5-dehydroepisterol. The third module or late pathway involves the ergosterol synthesis itself through consecutive reactions that mainly occur in the endoplasmic reticulum (ER) membrane. Firstly, the squalene synthase ERG9 catalyzes the condensation of 2 farnesyl pyrophosphate moieties to form squalene, which is the precursor of all steroids. Squalene synthase is crucial for balancing the incorporation of farnesyl diphosphate (FPP) into sterol and nonsterol isoprene synthesis. Secondly, the squalene epoxidase ERG1 catalyzes the stereospecific oxidation of squalene to (S)-2,3-epoxysqualene, which is considered to be a rate-limiting enzyme in steroid biosynthesis. Then, the lanosterol synthase ERG7 catalyzes the cyclization of (S)-2,3 oxidosqualene to lanosterol, a reaction that forms the sterol core. In the next steps, lanosterol is transformed to zymosterol through a complex process involving various demethylation, reduction and desaturation reactions. The lanosterol 14-alpha-demethylase ERG11 (also known as CYP51) catalyzes C14-demethylation of lanosterol to produce 4,4'-dimethyl cholesta-8,14,24-triene-3-beta-ol, which is critical for ergosterol biosynthesis. The C-14 reductase ERG24 reduces the C14=C15 double bond of 4,4-dimethyl-cholesta-8,14,24-trienol to produce 4,4-dimethyl-cholesta-8,24-dienol. 4,4-dimethyl-cholesta-8,24-dienol is substrate of the C-4 demethylation complex ERG25-ERG26-ERG27 in which ERG25 catalyzes the three-step monooxygenation required for the demethylation of 4,4-dimethyl and 4alpha-methylsterols, ERG26 catalyzes the oxidative decarboxylation that results in a reduction of the 3-beta-hydroxy group at the C-3 carbon to an oxo group, and ERG27 is responsible for the reduction of the keto group on the C-3. ERG28 has a role as a scaffold to help anchor ERG25, ERG26 and ERG27 to the endoplasmic reticulum and ERG29 regulates the activity of the iron-containing C4-methylsterol oxidase ERG25. Then, the sterol 24-C-methyltransferase ERG6 catalyzes the methyl transfer from S-adenosyl-methionine to the C-24 of zymosterol to form fecosterol. The C-8 sterol isomerase ERG2 catalyzes the reaction which results in unsaturation at C-7 in the B ring of sterols and thus converts fecosterol to episterol. The sterol-C5-desaturase ERG3 then catalyzes the introduction of a C-5 double bond in the B ring to produce 5-dehydroepisterol. The C-22 sterol desaturase ERG5 further converts 5-dehydroepisterol into ergosta-5,7,22,24(28)-tetraen-3beta-ol by forming the C-22(23) double bond in the sterol side chain. Finally, ergosta-5,7,22,24(28)-tetraen-3beta-ol is substrate of the C-24(28) sterol reductase ERG4 to produce ergosterol. In Candida albicans (strain SC5314 / ATCC MYA-2876) (Yeast), this protein is Delta(7)-sterol 5(6)-desaturase ERG3.